The chain runs to 290 residues: Putative OX-2 membrane glycoprotein homolog (290 aa).

Residues 1–17 (MSSLMLRLLPLLYIISA) form the signal peptide. At 18–267 (HFVLHPETSP…SDETVFTWTV (250 aa)) the chain is on the extracellular side. The Ig-like V-type domain maps to 23–135 (PETSPSLIYE…TFTVDNEKTS (113 aa)). C41 and C125 are oxidised to a cystine. Residues N71, N104, N194, and N202 are each glycosylated (N-linked (GlcNAc...) asparagine; by host). In terms of domain architecture, Ig-like C2-type spans 146 to 236 (PIVVLYFRYL…TNQKASALVT (91 aa)). Residues 268–288 (PLILILISVIVLLISVCIVAF) form a helical membrane-spanning segment. Residues 289-290 (KS) are Cytoplasmic-facing.

The protein resides in the membrane. This chain is Putative OX-2 membrane glycoprotein homolog (U85), found in Homo sapiens (Human).